A 75-amino-acid polypeptide reads, in one-letter code: Conotoxin Vt15.1 (75 aa).

The signal sequence occupies residues 1 to 19; that stretch reads MMPVILPLLLSLAIRGGDG. Positions 20–43 are excised as a propeptide; it reads QAIQGDRDLIAKLFKRYQEHGLSV. Residue Trp73 is modified to Tryptophan amide.

Belongs to the conotoxin V superfamily. Post-translationally, contains 4 disulfide bonds. As to expression, expressed by the venom duct.

Its subcellular location is the secreted. The protein is Conotoxin Vt15.1 of Conus planorbis (Planorbis cone).